Reading from the N-terminus, the 438-residue chain is Xylose isomerase (438 aa).

Catalysis depends on residues H100 and D103. Mg(2+) contacts are provided by E231, E267, H270, D295, D306, D308, and D338.

The protein belongs to the xylose isomerase family. Homotetramer. It depends on Mg(2+) as a cofactor.

The protein localises to the cytoplasm. The enzyme catalyses alpha-D-xylose = alpha-D-xylulofuranose. This is Xylose isomerase (xylA) from Thermoanaerobacter pseudethanolicus (strain ATCC 33223 / 39E) (Clostridium thermohydrosulfuricum).